Here is a 359-residue protein sequence, read N- to C-terminus: Putative B3 domain-containing protein At3g24850 (359 aa).

Disordered stretches follow at residues 92–111 and 159–192; these read DSEI…LQNS and EKME…KRTG. The span at 100–111 shows a compositional bias: polar residues; that stretch reads TSDSQMKTLQNS. Positions 250-351 form a DNA-binding region, TF-B3; that stretch reads FNNLLQNDFL…VLCFAMEQSS (102 aa).

Its subcellular location is the nucleus. This Arabidopsis thaliana (Mouse-ear cress) protein is Putative B3 domain-containing protein At3g24850.